Reading from the N-terminus, the 117-residue chain is Large ribosomal subunit protein uL18 (117 aa).

Over residues 1 to 17 (MNLSRNKARKVKQKRLR) the composition is skewed to basic residues. The segment at 1-23 (MNLSRNKARKVKQKRLRAKSELS) is disordered.

The protein belongs to the universal ribosomal protein uL18 family. As to quaternary structure, part of the 50S ribosomal subunit; part of the 5S rRNA/L5/L18/L25 subcomplex. Contacts the 5S and 23S rRNAs.

Functionally, this is one of the proteins that bind and probably mediate the attachment of the 5S RNA into the large ribosomal subunit, where it forms part of the central protuberance. This chain is Large ribosomal subunit protein uL18, found in Mycoplasmopsis synoviae (strain 53) (Mycoplasma synoviae).